A 318-amino-acid chain; its full sequence is Methionyl-tRNA formyltransferase (318 aa).

Residue 112–115 (SILP) participates in (6S)-5,6,7,8-tetrahydrofolate binding.

It belongs to the Fmt family.

It carries out the reaction L-methionyl-tRNA(fMet) + (6R)-10-formyltetrahydrofolate = N-formyl-L-methionyl-tRNA(fMet) + (6S)-5,6,7,8-tetrahydrofolate + H(+). Its function is as follows. Attaches a formyl group to the free amino group of methionyl-tRNA(fMet). The formyl group appears to play a dual role in the initiator identity of N-formylmethionyl-tRNA by promoting its recognition by IF2 and preventing the misappropriation of this tRNA by the elongation apparatus. In Haemophilus influenzae (strain PittEE), this protein is Methionyl-tRNA formyltransferase.